We begin with the raw amino-acid sequence, 428 residues long: MSYLIKNGFILTSTGEKVQQDIRVEGEVIQAIGHLEREDGEEVIDAKGLFVSPGLIDLHVHLREPGGEKKETIETGSKAAARGGYTTIAAMPNTRPVPDTKEQMEWLMNRIEETSSVRVLPYASITTRQIGEEMTDFAALKEAGAFAFTDDGVGIQTAGMMYEAMKKAASLDQAIVAHCEDNSLIYGGCVHEGEFSKANGLNGIPSICESVHIARDVLLAEAANCHYHVCHISTKESVRVVRDAKKAGIRVTAEVSPHHLLLCDADIPGLDTNYKMNPPLRGKEDREALIEGLLDGTIDFIATDHAPHTEEEKNETMQRAPFGIVGLETAFPLLYTRFVKTGEWTLKELVDYMTIKPAEAFSLPYGKLEKGQIADITLIDLNKEMAIDKKSFLSKGQNTPFDKLTVSGWPVMTLASGKVVYEEGRLVK.

The Zn(2+) site is built by His59 and His61. Substrate-binding positions include 61-63 and Asn93; that span reads HLR. Positions 151, 178, and 231 each coordinate Zn(2+). A substrate-binding site is contributed by Asn277. Position 304 (Asp304) interacts with Zn(2+). Asp304 is a catalytic residue. Residues His308 and 322–323 each bind substrate; that span reads FG.

The protein belongs to the metallo-dependent hydrolases superfamily. DHOase family. Class I DHOase subfamily. Zn(2+) is required as a cofactor.

It carries out the reaction (S)-dihydroorotate + H2O = N-carbamoyl-L-aspartate + H(+). The protein operates within pyrimidine metabolism; UMP biosynthesis via de novo pathway; (S)-dihydroorotate from bicarbonate: step 3/3. Functionally, catalyzes the reversible cyclization of carbamoyl aspartate to dihydroorotate. The polypeptide is Dihydroorotase (Bacillus pumilus (strain SAFR-032)).